Consider the following 692-residue polypeptide: uncharacterized protein (692 aa).

Residues 1 to 39 (MLRLPSSMPIVSFPANPNLLINPQPSWPSRRGNSAVVVS) constitute a chloroplast transit peptide. In terms of domain architecture, Protein kinase spans 189 to 523 (EISPEPVAAA…RLESLLSESL (335 aa)). Residues 195-203 (VAAASLGQV) and Lys218 contribute to the ATP site. Asp343 (proton acceptor) is an active-site residue.

Belongs to the protein kinase superfamily. ADCK protein kinase family.

It is found in the plastid. The protein resides in the chloroplast. The protein localises to the plastoglobule. This is an uncharacterized protein from Arabidopsis thaliana (Mouse-ear cress).